Consider the following 438-residue polypeptide: Na(+)/H(+) antiporter NhaA (438 aa).

11 helical membrane-spanning segments follow: residues 23–43 (FGGI…NSFL), 62–82 (FFIG…LFFL), 104–124 (SFPV…YFFL), 133–153 (GFGI…MLLG), 162–182 (VFLI…IALF), 185–205 (TNLK…LAVL), 221–241 (VLLW…AVIL), 302–322 (FLAP…NAGV), 337–357 (LGVI…ITFI), 372–392 (WWHI…SMFI), and 410–430 (IAIL…LFAL).

The protein belongs to the NhaA Na(+)/H(+) (TC 2.A.33) antiporter family.

Its subcellular location is the cell inner membrane. The catalysed reaction is Na(+)(in) + 2 H(+)(out) = Na(+)(out) + 2 H(+)(in). Na(+)/H(+) antiporter that extrudes sodium in exchange for external protons. The sequence is that of Na(+)/H(+) antiporter NhaA from Helicobacter pylori (strain ATCC 700392 / 26695) (Campylobacter pylori).